Reading from the N-terminus, the 875-residue chain is Alanine--tRNA ligase (875 aa).

4 residues coordinate Zn(2+): histidine 564, histidine 568, cysteine 666, and histidine 670.

This sequence belongs to the class-II aminoacyl-tRNA synthetase family. Homotetramer. The cofactor is Zn(2+).

The protein resides in the cytoplasm. It carries out the reaction tRNA(Ala) + L-alanine + ATP = L-alanyl-tRNA(Ala) + AMP + diphosphate. Catalyzes the attachment of alanine to tRNA(Ala) in a two-step reaction: alanine is first activated by ATP to form Ala-AMP and then transferred to the acceptor end of tRNA(Ala). Also edits incorrectly charged Ser-tRNA(Ala) and Gly-tRNA(Ala) via its editing domain. This chain is Alanine--tRNA ligase, found in Enterobacter sp. (strain 638).